A 582-amino-acid chain; its full sequence is Phosphoribosylaminoimidazole carboxylase (582 aa).

The region spanning 114–305 (KKYLAERGVA…QFENHLRAIL (192 aa)) is the ATP-grasp domain. 143–200 (AGRLGLPLMLKAKTLAYDGRGNSPLKSASSEDIQASLKFLGDRPLYAEGWAPFVKEVA) contributes to the ATP binding site.

This sequence in the C-terminal section; belongs to the AIR carboxylase family. Class I subfamily.

It carries out the reaction 5-amino-1-(5-phospho-D-ribosyl)imidazole-4-carboxylate + H(+) = 5-amino-1-(5-phospho-beta-D-ribosyl)imidazole + CO2. It participates in purine metabolism; IMP biosynthesis via de novo pathway; 5-amino-1-(5-phospho-D-ribosyl)imidazole-4-carboxylate from 5-amino-1-(5-phospho-D-ribosyl)imidazole (carboxylase route): step 1/1. The sequence is that of Phosphoribosylaminoimidazole carboxylase (ADE2) from Cryptococcus neoformans var. neoformans serotype D (strain B-3501A) (Filobasidiella neoformans).